The chain runs to 339 residues: Glycerol-3-phosphate dehydrogenase [NAD(P)+] (339 aa).

Residues S14, Y15, H35, and K109 each contribute to the NADPH site. K109, G138, and T140 together coordinate sn-glycerol 3-phosphate. A142 provides a ligand contact to NADPH. Sn-glycerol 3-phosphate-binding residues include K194, D247, S257, R258, and N259. K194 (proton acceptor) is an active-site residue. Residue R258 participates in NADPH binding. Positions 282 and 284 each coordinate NADPH.

This sequence belongs to the NAD-dependent glycerol-3-phosphate dehydrogenase family.

It is found in the cytoplasm. It catalyses the reaction sn-glycerol 3-phosphate + NAD(+) = dihydroxyacetone phosphate + NADH + H(+). It carries out the reaction sn-glycerol 3-phosphate + NADP(+) = dihydroxyacetone phosphate + NADPH + H(+). The protein operates within membrane lipid metabolism; glycerophospholipid metabolism. Its function is as follows. Catalyzes the reduction of the glycolytic intermediate dihydroxyacetone phosphate (DHAP) to sn-glycerol 3-phosphate (G3P), the key precursor for phospholipid synthesis. The polypeptide is Glycerol-3-phosphate dehydrogenase [NAD(P)+] (Shewanella pealeana (strain ATCC 700345 / ANG-SQ1)).